We begin with the raw amino-acid sequence, 356 residues long: MDTSRKIIHIDMDAFYASVEQRDHPEFRGKPLIIGGDPNKRGVVATCSYEARKFGVHSAMPTRQAAKLCPNGIFIHGNMAHYVEVSNQIREIFSRYTDIIEPLSLDEAYLDVTENKKGMKSATMVAREIQQTIYQELGLTASAGVSFNKFIAKIASDFKKPAGITVVTPEEAEAFLEQIPVTKFYGVGKVTAEKLHRLGIETGADLKKWSEWDLIRELHKHGYHLYRHVRGRSNNIVNPHRDRKSVGKETTFEFNVLDSRVLEQSLMQFAKKVEERLIKLQKHGKTVVLKLRYSDFTTITKRLTLNEYTNDASQIYQAAALLLRESYTGQDSIRLIGLTVTNLKPVYFENLRLEGL.

Residues 7-188 (IIHIDMDAFY…IPVTKFYGVG (182 aa)) enclose the UmuC domain. Residues aspartate 11 and aspartate 106 each contribute to the Mg(2+) site. Glutamate 107 is an active-site residue.

It belongs to the DNA polymerase type-Y family. Monomer. Mg(2+) serves as cofactor.

It is found in the cytoplasm. The catalysed reaction is DNA(n) + a 2'-deoxyribonucleoside 5'-triphosphate = DNA(n+1) + diphosphate. Its function is as follows. Poorly processive, error-prone DNA polymerase involved in untargeted mutagenesis. Copies undamaged DNA at stalled replication forks, which arise in vivo from mismatched or misaligned primer ends. These misaligned primers can be extended by PolIV. Exhibits no 3'-5' exonuclease (proofreading) activity. May be involved in translesional synthesis, in conjunction with the beta clamp from PolIII. In Listeria monocytogenes serotype 4b (strain CLIP80459), this protein is DNA polymerase IV.